A 2072-amino-acid chain; its full sequence is Protein still life, isoform SIF type 1 (2072 aa).

Residue glycine 2 is the site of N-myristoyl glycine attachment. Positions 29-147 (RRDGHLLSSF…ECCSPSFKFS (119 aa)) constitute a WH1 domain. 7 disordered regions span residues 153 to 188 (SYSLKLDPPGKGKVKAKRKPLSTPASPSRVRQEPQC), 245 to 284 (DNVASGGPGTNQGADTLPRQMKGGQQDRQDVANSGVNTNT), 327 to 355 (EGTQAGGGLHQSVGTCTSSSKGTGTRNKD), 459 to 486 (NNTMGRASSQSSRFSGSRSSHEIGRGYP), 502 to 576 (EGSP…SPTS), 618 to 655 (AKSSTLPLPPHRPLSTIRDKERDRDRDGYYSDRNELIR), and 699 to 747 (SGSS…YKSA). Positions 275-284 (VANSGVNTNT) are enriched in polar residues. Composition is skewed to low complexity over residues 338-351 (SVGTCTSSSKGTGT), 459-476 (NNTMGRASSQSSRFSGSR), and 522-553 (SSSNGNSDQDQSYGQQQSSGQHPQQQQGPPQR). Positions 564 to 576 (APNVTPTPGSPTS) are enriched in polar residues. The span at 634-655 (IRDKERDRDRDGYYSDRNELIR) shows a compositional bias: basic and acidic residues. The span at 732–743 (SLRQDSSLNDSG) shows a compositional bias: polar residues. Residues 840–958 (TGAVRKAGFL…SIHSACAAAF (119 aa)) enclose the PH domain. A disordered region spans residues 1088-1119 (GRGATKRRPPMLSRSNSGSSRRSMQMNSRDEP). The segment covering 1100–1114 (SRSNSGSSRRSMQMN) has biased composition (low complexity). Residues 1121–1188 (KTFKVAMPDN…PHRNDLIENY (68 aa)) form the RBD domain. Positions 1204–1293 (QVELQRTTLE…LSMMMRSSRT (90 aa)) constitute a PDZ domain. Residues 1403–1424 (AEQETRKSSPTGSVTSSVSTTA) are disordered. The segment covering 1410–1424 (SSPTGSVTSSVSTTA) has biased composition (low complexity). The region spanning 1436–1630 (KLRKVVMELV…EKVAEHINEM (195 aa)) is the DH domain. 3 disordered regions span residues 1803–1832 (MKNFGGSSGSVSGHSSQGMGSMGYPGNSQT), 1844–2039 (HGSH…YQPV), and 2051–2072 (PRDMINLGTDPQSTTRKDDVKN). Low complexity-rich tracts occupy residues 1811–1821 (GSVSGHSSQGM) and 1926–1943 (QQQQQQQQQQQQLMQQGH). Basic and acidic residues predominate over residues 1970-1984 (HSSDIERIDPGTKSE). The span at 2007–2022 (LTLSTTSTLSVGSTGS) shows a compositional bias: low complexity. Polar residues predominate over residues 2023–2032 (QARLIQSSHP).

In terms of tissue distribution, expressed in both larval and adult brains, mainly in a subset of neurons but not in glia. In the adult eye is expressed in the two primary pigment cells in the subapical region of the eye. Also present in photoreceptors.

It is found in the synapse. Its function is as follows. Regulates synaptic differentiation through the organization of actin cytoskeleton possibly by activating Rho-like GTPases. Is likely a factor in the cascade of Rac1 or Cdc42 in the neurons. May play a role in maintaining proper septate junction functions. Required for eye development and most likely affects corneal lens-formation. This is Protein still life, isoform SIF type 1 (sif) from Drosophila melanogaster (Fruit fly).